The sequence spans 435 residues: RuBisCO large subunit-binding protein subunit beta-1 (435 aa).

The protein belongs to the chaperonin (HSP60) family. Oligomer of probably six alpha and six beta subunits.

The protein localises to the plastid. It localises to the chloroplast. In terms of biological role, this protein binds RuBisCO small and large subunits and is implicated in the assembly of the enzyme oligomer. This Chlamydomonas reinhardtii (Chlamydomonas smithii) protein is RuBisCO large subunit-binding protein subunit beta-1.